Consider the following 244-residue polypeptide: Type I iodothyronine deiodinase (244 aa).

Over 1–12 the chain is Extracellular; that stretch reads MGLSQLGLWLRR. Residues 13-33 traverse the membrane as a helical; Signal-anchor for type III membrane protein segment; the sequence is LWVLFQVALQVAVGKVFLILF. At 34–244 the chain is on the cytoplasmic side; the sequence is PSRVKQHIVA…VRAVLEKLHS (211 aa). Sec121 is an active-site residue. A non-standard amino acid (selenocysteine) is located at residue Sec121.

It belongs to the iodothyronine deiodinase family. In terms of assembly, predominantly monomer. Can form homodimers but homodimerization is not essential for enzyme activity.

The protein localises to the cell membrane. Its subcellular location is the endoplasmic reticulum membrane. It is found in the basolateral cell membrane. It catalyses the reaction 3,3',5-triiodo-L-thyronine + iodide + A + H(+) = L-thyroxine + AH2. The catalysed reaction is 3,3',5'-triiodo-L-thyronine + iodide + A + H(+) = L-thyroxine + AH2. It carries out the reaction 3,3'-diiodo-L-thyronine + iodide + A + H(+) = 3,3',5'-triiodo-L-thyronine + AH2. The enzyme catalyses 3,3'-diiodo-L-thyronine + iodide + A + H(+) = 3,3',5-triiodo-L-thyronine + AH2. It catalyses the reaction 3'-iodo-L-thyronine + iodide + A + H(+) = 3',5'-diiodo-L-thyronine + AH2. The catalysed reaction is 3-iodo-L-thyronine + iodide + A + H(+) = 3,5-diiodo-L-thyronine + AH2. It carries out the reaction 3-iodo-L-thyronine + iodide + A + H(+) = 3,3'-diiodo-L-thyronine + AH2. The enzyme catalyses 3,3'-diiodothyronamine + iodide + A + H(+) = 3,3',5'-triiodothyronamine + AH2. It catalyses the reaction 3'-iodothyronamine + iodide + A + H(+) = 3',5'-diiodothyronamine + AH2. The catalysed reaction is 3-iodothyronamine + iodide + A + H(+) = 3,3'-diiodothyronamine + AH2. It carries out the reaction 3,3'-diiodothyronamine + iodide + A + H(+) = 3,3',5-triiodothyronamine + AH2. The enzyme catalyses 3-iodothyronamine + iodide + A + H(+) = 3,5-diiodothyronamine + AH2. It catalyses the reaction 3,3'-diiodo-L-thyronine sulfate + iodide + A + H(+) = 3,3',5'-triiodo-L-thyronine sulfate + AH2. The catalysed reaction is 3,3',5'-triiodo-L-thyronine sulfate + iodide + A + H(+) = L-thyroxine sulfate + AH2. It carries out the reaction 3,3'-diiodo-L-thyronine sulfate + iodide + A + H(+) = 3,3',5-triiodo-L-thyronine sulfate + AH2. Plays a crucial role in the metabolism of thyroid hormones (TH) and has specific roles in TH activation and inactivation by deiodination. Catalyzes the deiodination of L-thyroxine (T4) to 3,5,3'-triiodothyronine (T3) and 3',5'-diiodothyronine (3',5'-T2) to 3'-monoiodothyronine (3'-T1) via outer-ring deiodination (ORD). Catalyzes the deiodination of T4 to 3,3',5'-triiodothyronine (rT3), T3 to 3,3'-diiodothyronine (3,3'-T2), 3,5-diiodothyronine (3,5-T2) to 3-monoiodothyronine (3-T1) and 3,3'-T2 to 3-T1 via inner-ring deiodination (IRD). Catalyzes the deiodination of rT3 to 3,3'-T2 via ORD. Catalyzes the phenolic ring deiodinations of 3,3',5'-triiodothyronamine, 3',5'-diiodothyronamine and 3,3'-diiodothyronamine as well as tyrosyl ring deiodinations of 3,5,3'-triiodothyronamine and 3,5-diiodothyronamine. Catalyzes the deiodination of L-thyroxine sulfate and 3,3',5-triiodo-L-thyronine sulfate via IRD and of 3,3',5'-triiodo-L-thyronine sulfate via ORD. The sequence is that of Type I iodothyronine deiodinase (DIO1) from Felis catus (Cat).